The following is a 201-amino-acid chain: TATA-box-binding protein 2 (201 aa).

A run of 2 repeats spans residues 26–102 (LQNI…ARII) and 116–193 (IQNI…YPVL).

It belongs to the TBP family. As to quaternary structure, belongs to the TFIID complex together with the TBP-associated factors (TAFs). Binds DNA as monomer.

The protein resides in the nucleus. General transcription factor that functions at the core of the DNA-binding multiprotein factor TFIID. Binding of TFIID to the TATA box is the initial transcriptional step of the pre-initiation complex (PIC), playing a role in the activation of eukaryotic genes transcribed by RNA polymerase II. The protein is TATA-box-binding protein 2 (TBP2) of Triticum aestivum (Wheat).